A 477-amino-acid polypeptide reads, in one-letter code: Diphthine methyltransferase (477 aa).

WD repeat units lie at residues 194 to 232 (HFEA…TPVF), 236 to 276 (RHCM…QPLA), and 422 to 464 (VKTR…ARTL).

Belongs to the DPH7 family. Interacts with INCA1.

The catalysed reaction is diphthine methyl ester-[translation elongation factor 2] + H2O = diphthine-[translation elongation factor 2] + methanol + H(+). The protein operates within protein modification; peptidyl-diphthamide biosynthesis. Its function is as follows. Catalyzes the demethylation of diphthine methyl ester to form diphthine, an intermediate diphthamide biosynthesis, a post-translational modification of histidine which occurs in translation elongation factor 2 (EEF2). This chain is Diphthine methyltransferase (Dph7), found in Mus musculus (Mouse).